Here is a 290-residue protein sequence, read N- to C-terminus: Probable lipid hydrolase 463L (290 aa).

2 helical membrane passes run 26–46 and 53–73; these read TLVL…LNGL and ISTF…SIGY. Residues 27 to 207 form the PNPLA domain; that stretch reads LVLSGGAMRG…WNNFPIDIAI (181 aa). The GXSXG motif lies at 58 to 62; that stretch reads GISSG. The Nucleophile role is filled by Ser60. The active-site Proton acceptor is the Asp194. The short motif at 194–196 is the DGA/G element; sequence DGG.

It is found in the membrane. Its function is as follows. Probable lipid hydrolase. The protein is Probable lipid hydrolase 463L of Invertebrate iridescent virus 6 (IIV-6).